Reading from the N-terminus, the 862-residue chain is Valine--tRNA ligase (862 aa).

A 'HIGH' region motif is present at residues 43-53 (PTVSGALHVGH). A disordered region spans residues 459 to 494 (ERPILPDDAALPVDPSSDTPTGYHDSQRHQPGGFMA). A 'KMSKS' region motif is present at residues 574–578 (KMSKS). An ATP-binding site is contributed by K577.

This sequence belongs to the class-I aminoacyl-tRNA synthetase family. ValS type 2 subfamily. As to quaternary structure, monomer.

Its subcellular location is the cytoplasm. It catalyses the reaction tRNA(Val) + L-valine + ATP = L-valyl-tRNA(Val) + AMP + diphosphate. Functionally, catalyzes the attachment of valine to tRNA(Val). As ValRS can inadvertently accommodate and process structurally similar amino acids such as threonine, to avoid such errors, it has a 'posttransfer' editing activity that hydrolyzes mischarged Thr-tRNA(Val) in a tRNA-dependent manner. The protein is Valine--tRNA ligase of Salinispora arenicola (strain CNS-205).